The sequence spans 72 residues: Translation initiation factor IF-1 (72 aa).

In terms of domain architecture, S1-like spans 1–72 (MAKEDVIEVE…TRGRITYRFK (72 aa)).

The protein belongs to the IF-1 family. In terms of assembly, component of the 30S ribosomal translation pre-initiation complex which assembles on the 30S ribosome in the order IF-2 and IF-3, IF-1 and N-formylmethionyl-tRNA(fMet); mRNA recruitment can occur at any time during PIC assembly.

The protein localises to the cytoplasm. Its function is as follows. One of the essential components for the initiation of protein synthesis. Stabilizes the binding of IF-2 and IF-3 on the 30S subunit to which N-formylmethionyl-tRNA(fMet) subsequently binds. Helps modulate mRNA selection, yielding the 30S pre-initiation complex (PIC). Upon addition of the 50S ribosomal subunit IF-1, IF-2 and IF-3 are released leaving the mature 70S translation initiation complex. This is Translation initiation factor IF-1 from Listeria innocua serovar 6a (strain ATCC BAA-680 / CLIP 11262).